The following is a 215-amino-acid chain: MAVFGYEMDEHRASSSRRRRSLYHNLGGGRFADIMFWKNKKESGTILGVFTLIWFLFEVVEYPFITFLCQILLLFIFIFLIWSYIGSSQLIQSKPPSINDLRISESNWRFLFNKINWFIIKLYDISSGKDFRLLFLAVVSLWILSVVGNYFSSLTLLYIVFVGLETIPMLYEQYEEELTYAASKSGRDMKKLLNKFNSKVINKIPKAQAKTRRTM.

The Reticulon domain occupies 31–211; it reads FADIMFWKNK…NKIPKAQAKT (181 aa). 3 helical membrane-spanning segments follow: residues 41–61, 62–82, and 141–161; these read KESG…EVVE, YPFI…FLIW, and LWIL…YIVF.

Its subcellular location is the endoplasmic reticulum membrane. The polypeptide is Reticulon-like protein B14 (RTNLB14) (Arabidopsis thaliana (Mouse-ear cress)).